The primary structure comprises 231 residues: Adenosylcobinamide-GDP ribazoletransferase (231 aa).

6 helical membrane-spanning segments follow: residues 29–49 (ICAY…SMKL), 53–73 (NFLW…LFHF), 101–121 (IGPF…YAFL), 126–146 (IDLI…LHFG), 167–187 (LISL…IISL), and 211–231 (DVLG…LSLI).

This sequence belongs to the CobS family. Mg(2+) is required as a cofactor.

The protein resides in the cell inner membrane. It catalyses the reaction alpha-ribazole + adenosylcob(III)inamide-GDP = adenosylcob(III)alamin + GMP + H(+). The catalysed reaction is alpha-ribazole 5'-phosphate + adenosylcob(III)inamide-GDP = adenosylcob(III)alamin 5'-phosphate + GMP + H(+). It functions in the pathway cofactor biosynthesis; adenosylcobalamin biosynthesis; adenosylcobalamin from cob(II)yrinate a,c-diamide: step 7/7. Joins adenosylcobinamide-GDP and alpha-ribazole to generate adenosylcobalamin (Ado-cobalamin). Also synthesizes adenosylcobalamin 5'-phosphate from adenosylcobinamide-GDP and alpha-ribazole 5'-phosphate. The protein is Adenosylcobinamide-GDP ribazoletransferase of Kosmotoga olearia (strain ATCC BAA-1733 / DSM 21960 / TBF 19.5.1).